The chain runs to 199 residues: Recombination protein RecR (199 aa).

The segment at 57–72 adopts a C4-type zinc-finger fold; sequence CQKCRTFTEQSLCPIC. A Toprim domain is found at 81–176; it reads DTLCVVETPA…AVSRIAHGVP (96 aa).

This sequence belongs to the RecR family.

May play a role in DNA repair. It seems to be involved in an RecBC-independent recombinational process of DNA repair. It may act with RecF and RecO. This Shewanella amazonensis (strain ATCC BAA-1098 / SB2B) protein is Recombination protein RecR.